We begin with the raw amino-acid sequence, 24 residues long: Brevinin-1Sa (24 aa).

Cys-18 and Cys-24 form a disulfide bridge.

As to expression, expressed by the skin glands.

It localises to the secreted. In terms of biological role, antibacterial activity against Gram-negative bacterium E.coli. The polypeptide is Brevinin-1Sa (Lithobates sphenocephalus (Southern leopard frog)).